The chain runs to 719 residues: MLLVHIISFLLFFQLSAAKAPPSKTSLINTHERRSIYSCYVGLRKETWGFNGSAICRYEPAIQSMLYCLYEDTHEKGYSNKTLEKGFEEMRQFCYTPKFLNMTDAEFYTSLDNGTYYIQDQPKAGINITYPIRLNTTLRKAYYDAYYGYYYNHDIPYYFGGIICAYFVGVMLLAGLIRFLNYTPIKKIMFQQKLVNYVRGYTTLPTLYEKHAEPFSYLKVITGYLPTRFETLVILGYLILHTIFMAYKYQYDPYHIIFAAHRAEVAHFVAYRSGILSFAHLPLIVLFAGRNNFLQLISGLKHTSFIVFHKWLGRMMFLDAIIHAAGFTNYYLYYKKWNTVRLRVYWKFGIATTCLAGMLIFFSIAAFRRHYYETFMALHIVFAALFLYTCWEHVTNFSGIEWIYAAIAIWGVDRIVRITRIALLGFPKADLQLVGSDLVRVTVKKPKKFWKAKPGQYVFVSFLRPLCFWQSHPFTVMDSCVNDRELVIVLKAKKGVTKLVRNFVERKGGKASMRLAIEGPYGSKSTAHRFDNVLLLAGGSGLPGPISHALELGKTTAASGKNFVQLVIAVRGLDMLNACKKELMALKGLNVQVHIYNSKQELASAEKISSNEVKNGETTAEKAPSSLSNSEKAPSESENTELPLSLNDTSISDLEFATFHVGRPNVEEILNESVNHSGSLAVVCCGPPIFVDTARNQTAKAVIRNPSRMIEYLEEYQAW.

Positions 1-18 (MLLVHIISFLLFFQLSAA) are cleaved as a signal peptide. At 19 to 156 (KAPPSKTSLI…YGYYYNHDIP (138 aa)) the chain is on the extracellular side. Asparagine 51, asparagine 80, asparagine 101, asparagine 113, asparagine 127, and asparagine 135 each carry an N-linked (GlcNAc...) asparagine glycan. Residues 157-177 (YYFGGIICAYFVGVMLLAGLI) form a helical membrane-spanning segment. Residues 178–228 (RFLNYTPIKKIMFQQKLVNYVRGYTTLPTLYEKHAEPFSYLKVITGYLPTR) lie on the Cytoplasmic side of the membrane. Residues 229–249 (FETLVILGYLILHTIFMAYKY) traverse the membrane as a helical segment. Residues 250 to 267 (QYDPYHIIFAAHRAEVAH) are Extracellular-facing. A helical transmembrane segment spans residues 268 to 288 (FVAYRSGILSFAHLPLIVLFA). Residues 273 to 407 (SGILSFAHLP…SGIEWIYAAI (135 aa)) form the Ferric oxidoreductase domain. Topologically, residues 289 to 304 (GRNNFLQLISGLKHTS) are cytoplasmic. Residues 305-325 (FIVFHKWLGRMMFLDAIIHAA) traverse the membrane as a helical segment. Histidine 309 and histidine 323 together coordinate heme. At 326–346 (GFTNYYLYYKKWNTVRLRVYW) the chain is on the extracellular side. A helical transmembrane segment spans residues 347-367 (KFGIATTCLAGMLIFFSIAAF). Residues 368 to 373 (RRHYYE) lie on the Cytoplasmic side of the membrane. Residues 374–394 (TFMALHIVFAALFLYTCWEHV) form a helical membrane-spanning segment. Positions 379 and 393 each coordinate heme. Threonine 395 is a topological domain (extracellular). A helical transmembrane segment spans residues 396–416 (NFSGIEWIYAAIAIWGVDRIV). Residues 408–527 (AIWGVDRIVR…EGPYGSKSTA (120 aa)) form the FAD-binding FR-type domain. Residues 417 to 719 (RITRIALLGF…IEYLEEYQAW (303 aa)) are Cytoplasmic-facing. Residue 472 to 478 (HPFTVMD) coordinates FAD. 519–522 (GPYG) contributes to the NADP(+) binding site. Polar residues-rich tracts occupy residues 606-618 (EKIS…NGET) and 625-643 (SSLS…TELP). Positions 606-643 (EKISSNEVKNGETTAEKAPSSLSNSEKAPSESENTELP) are disordered. 685 to 686 (CG) provides a ligand contact to NADP(+).

This sequence belongs to the ferric reductase (FRE) family. Requires FAD as cofactor.

It localises to the cell membrane. It catalyses the reaction 2 a Fe(II)-siderophore + NADP(+) + H(+) = 2 a Fe(III)-siderophore + NADPH. Functionally, siderophore-iron reductase responsible for reducing extracellular iron prior to import. Catalyzes the reductive uptake of Fe(3+) bound to dihydroxamate rhodotorulic acid. Fe(3+) is reduced to Fe(2+), which then dissociates from the siderophore and can be imported by the high-affinity Fe(2+) transport complex in the plasma membrane. The protein is Ferric reductase transmembrane component 4 (FRE4) of Saccharomyces cerevisiae (strain ATCC 204508 / S288c) (Baker's yeast).